The chain runs to 223 residues: Cytidylate kinase (223 aa).

12-20 (GPSGVGKGT) lines the ATP pocket.

Belongs to the cytidylate kinase family. Type 1 subfamily.

The protein resides in the cytoplasm. The enzyme catalyses CMP + ATP = CDP + ADP. The catalysed reaction is dCMP + ATP = dCDP + ADP. This chain is Cytidylate kinase, found in Xylella fastidiosa (strain M12).